Consider the following 243-residue polypeptide: NAD-dependent protein deacetylase (243 aa).

Residues 1-243 (MRNDLETLKH…VSVVKSLMTE (243 aa)) enclose the Deacetylase sirtuin-type domain. Ala-24, Phe-35, Arg-36, Gln-105, Ile-107, Asp-108, and His-123 together coordinate NAD(+). Phe-35 provides a ligand contact to nicotinamide. The nicotinamide site is built by Ile-107 and Asp-108. His-123 serves as the catalytic Proton acceptor. Zn(2+) contacts are provided by Cys-131, Cys-134, Cys-151, and Cys-154. 4 residues coordinate NAD(+): Ser-192, Ser-193, Asn-215, and Asp-232.

It belongs to the sirtuin family. Class U subfamily. Zn(2+) is required as a cofactor.

Its subcellular location is the cytoplasm. It catalyses the reaction N(6)-acetyl-L-lysyl-[protein] + NAD(+) + H2O = 2''-O-acetyl-ADP-D-ribose + nicotinamide + L-lysyl-[protein]. Its function is as follows. NAD-dependent protein deacetylase which modulates the activities of several enzymes which are inactive in their acetylated form. The sequence is that of NAD-dependent protein deacetylase from Staphylococcus aureus (strain Mu50 / ATCC 700699).